Consider the following 150-residue polypeptide: Histone H3-like centromeric protein A (150 aa).

The interval 1-56 (MRPGSTPASRRKSRPPRRVSPPLPTTSTRSPGRPSAPEQRKAPRATPKKRFRPGTR) is disordered. Over residues 25-37 (TTSTRSPGRPSAP) the composition is skewed to low complexity. Residues 42 to 53 (APRATPKKRFRP) are compositionally biased toward basic residues. The tract at residues 53-150 (PGTRALMEIR…RIRGVTEGLG (98 aa)) is H3-like.

Belongs to the histone H3 family. Component of centromeric nucleosomes, where DNA is wrapped around a histone octamer core. The octamer contains two molecules each of H2A, H2B, CENPA and H4 assembled in one CENPA-H4 heterotetramer and two H2A-H2B heterodimers. CENPA modulates the DNA-binding characteristics of nucleosomes so that protruding DNA ends have higher flexibility than in nucleosomes containing conventional histone H3.

The protein resides in the nucleus. It is found in the chromosome. Its subcellular location is the centromere. Functionally, histone H3-like nucleosomal protein that is specifically found in centromeric nucleosomes. Replaces conventional H3 in the nucleosome core of centromeric chromatin that serves as an assembly site for the inner kinetochore. The presence of CENPA subtly modifies the nucleosome structure and the way DNA is wrapped around the nucleosome and gives rise to protruding DNA ends that are less well-ordered and rigid compared to nucleosomes containing histone H3. May serve as an epigenetic mark that propagates centromere identity through replication and cell division. Required for recruitment and assembly of kinetochore proteins, and as a consequence required for progress through mitosis, chromosome segregation and cytokinesis. The polypeptide is Histone H3-like centromeric protein A (cenpa) (Xenopus tropicalis (Western clawed frog)).